Reading from the N-terminus, the 262-residue chain is NAC domain-containing protein 71 (262 aa).

The NAC domain occupies 6 to 160 (LPPGFRFHPT…AFALCRVVKK (155 aa)). Residues 107 to 166 (AGYRKTLVFYEGRAPLGDRTNWFMHEYRLCDIDDHSQKSPNFKGAFALCRVVKKNELKKN) mediate DNA binding.

It localises to the nucleus. Transcription factor involved in tissue reunion of wounded inflorescence stems. Required for the division of pith cells in the reunion process, which is dependent on polar-transported auxin and the wound-inducible hormones ethylene and jasmonate. Binds to the promoters of XTH19 and XTH20 to induce their expression via auxin signaling. XTH19 and XTH20 are involved in cell proliferation in the tissue reunion process of incised stems. Involved in hypocotyl graft union formation. Required for the auxin- mediated promotion of vascular tissue proliferation during hypocotyl graft attachment. The sequence is that of NAC domain-containing protein 71 from Arabidopsis thaliana (Mouse-ear cress).